A 297-amino-acid chain; its full sequence is Taste receptor type 2 member 4 (297 aa).

Topologically, residues 1–11 (MLWELYVFVFA) are extracellular. Residues 12–32 (ASVFLNFVGIIANLFIIVIII) form a helical membrane-spanning segment. Residues 33–46 (KTWVNSRRIASPDR) lie on the Cytoplasmic side of the membrane. The chain crosses the membrane as a helical span at residues 47-67 (ILFSLAITRFLTLGLFLLNSV). Residues 68–80 (YIATNTGRSVYFS) lie on the Extracellular side of the membrane. A helical membrane pass occupies residues 81-101 (TFFLLCWKFLDANSLWLVTIL). At 102-128 (NSLYCVKITNFQHPVFLLLKRTISMKT) the chain is on the cytoplasmic side. Residues 129 to 149 (TSLLLACLLISALTTLLYYML) form a helical membrane-spanning segment. Residues 150–171 (SQISRFPEHIIGRNDTSFDLSD) are Extracellular-facing. N163 carries N-linked (GlcNAc...) asparagine glycosylation. Residues 172–192 (GILTLVASLVLNSLLQFMLNV) traverse the membrane as a helical segment. Residues 193–229 (TFASLLIHSLRRHIQKMQRNRTSFWNPQTEAHMGAMR) lie on the Cytoplasmic side of the membrane. Residues 230–250 (LMICFLVLYIPYSIATLLYLP) form a helical membrane-spanning segment. Residues 251–260 (SYMRKNLRAQ) are Extracellular-facing. A helical transmembrane segment spans residues 261-281 (AICMIITAAYPPGHSVLLIIT). Over 282–297 (HHKLKAKAKKIFCFYK) the chain is Cytoplasmic.

The protein belongs to the G-protein coupled receptor T2R family. In terms of tissue distribution, expressed in subsets of taste receptor cells of the tongue and palate epithelium and exclusively in gustducin-positive cells. Expressed in 15% taste bud cells in circumvallate and foliate papillae but only in 2% in fungiform papillae.

The protein localises to the membrane. The protein resides in the cell projection. It localises to the cilium membrane. Its function is as follows. Gustducin-coupled receptor for denatonium and N(6)-propyl-2-thiouracil implicated in the perception of bitter compounds in the oral cavity and the gastrointestinal tract. Signals through PLCB2 and the calcium-regulated cation channel TRPM5. In airway epithelial cells, binding of denatonium increases the intracellular calcium ion concentration and stimulates ciliary beat frequency. This is Taste receptor type 2 member 4 (Tas2r4) from Mus musculus (Mouse).